The primary structure comprises 311 residues: tRNA dimethylallyltransferase 2 (311 aa).

15–22 (GPTAVGKT) provides a ligand contact to ATP. Position 17-22 (17-22 (TAVGKT)) interacts with substrate. The interval 40-43 (DSMQ) is interaction with substrate tRNA.

Belongs to the IPP transferase family. As to quaternary structure, monomer. The cofactor is Mg(2+).

The catalysed reaction is adenosine(37) in tRNA + dimethylallyl diphosphate = N(6)-dimethylallyladenosine(37) in tRNA + diphosphate. Its function is as follows. Catalyzes the transfer of a dimethylallyl group onto the adenine at position 37 in tRNAs that read codons beginning with uridine, leading to the formation of N6-(dimethylallyl)adenosine (i(6)A). In Syntrophus aciditrophicus (strain SB), this protein is tRNA dimethylallyltransferase 2.